The primary structure comprises 300 residues: Geranyl diphosphate 2-C-methyltransferase (300 aa).

A disordered region spans residues 1-24 (MAAASAPVPGPGGASSTARGRIPA).

This sequence belongs to the geranyl diphosphate 2-C-methyltransferase family. Requires Mg(2+) as cofactor.

It catalyses the reaction (2E)-geranyl diphosphate + S-adenosyl-L-methionine = (E)-2-methylgeranyl diphosphate + S-adenosyl-L-homocysteine + H(+). Functionally, catalyzes the SAM-dependent methylation of geranyl diphosphate (GPP) to yield (E)-2-methylgeranyl diphosphate (2-MeGPP). The polypeptide is Geranyl diphosphate 2-C-methyltransferase (gdpmt) (Streptomyces lasalocidi (Streptomyces lasaliensis)).